Reading from the N-terminus, the 631-residue chain is Myotonin-protein kinase (631 aa).

The Cytoplasmic segment spans residues 1 to 592; it reads MSAEVRLRQL…PRPGLSEARC (592 aa). Residues 71–339 enclose the Protein kinase domain; it reads FEILKVIGRG…AGDFQKHPFF (269 aa). ATP contacts are provided by residues 77-85 and Lys100; that span reads IGRGAFSEV. The active-site Proton acceptor is Asp195. 2 positions are modified to phosphoserine; by autocatalysis: Ser216 and Ser228. Thr234 carries the phosphothreonine; by autocatalysis modification. The AGC-kinase C-terminal domain occupies 340 to 415; the sequence is FGLDWEGLRD…CCMAFRDNQV (76 aa). Residues 464–532 adopt a coiled-coil conformation; the sequence is AETTVTLQQL…QERMEMLQAP (69 aa). Residues 593-613 traverse the membrane as a helical; Anchor for type IV membrane protein segment; it reads LLLFAAALAAAATLGCTGLVA. The Lumenal portion of the chain corresponds to 614–631; it reads YTGGLTPVWCFPGATFAP.

The protein belongs to the protein kinase superfamily. AGC Ser/Thr protein kinase family. DMPK subfamily. In terms of assembly, homodimer; homodimerization stimulates the kinase activity. Interacts with HSPB2; may enhance DMPK kinase activity. Interacts with PLN; phosphorylates PLN. May interact with RAC1; may regulate DMPK kinase activity. Interacts with LMNA; may regulate nuclear envelope stability. It depends on Mg(2+) as a cofactor. Post-translationally, phosphorylated. Autophosphorylates. Phosphorylation by RAF1 may result in activation of DMPK. Proteolytic processing of the C-terminus may remove the transmembrane domain and release the kinase from membranes stimulating its activity. As to expression, expressed in all tissues tested, with a predominance in brain, skeletal muscle, heart, and other tissues containing smooth muscle. In the heart, expression is restricted to the cardiomyocytes in the ventricle and atrium.

Its subcellular location is the sarcoplasmic reticulum membrane. It localises to the cell membrane. The protein localises to the endoplasmic reticulum membrane. It is found in the nucleus outer membrane. The protein resides in the mitochondrion outer membrane. Its subcellular location is the cytoplasm. It localises to the cytosol. The catalysed reaction is L-seryl-[protein] + ATP = O-phospho-L-seryl-[protein] + ADP + H(+). The enzyme catalyses L-threonyl-[protein] + ATP = O-phospho-L-threonyl-[protein] + ADP + H(+). Coiled-coil-mediated oligomerization enhances the catalytic activity. Proteolytic processing of the C-terminus may release the protein from membranes and constitute a mean to regulate the enzyme. May be regulated by HSPB2, RAC1, RAF1 and G-protein second messengers. Non-receptor serine/threonine protein kinase which is necessary for the maintenance of skeletal muscle structure and function. May play a role in myocyte differentiation and survival by regulating the integrity of the nuclear envelope and the expression of muscle-specific genes. May also phosphorylate PPP1R12A and inhibit the myosin phosphatase activity to regulate myosin phosphorylation. Also critical to the modulation of cardiac contractility and to the maintenance of proper cardiac conduction activity probably through the regulation of cellular calcium homeostasis. Phosphorylates PLN, a regulator of calcium pumps and may regulate sarcoplasmic reticulum calcium uptake in myocytes. May also phosphorylate FXYD1/PLM which is able to induce chloride currents. May also play a role in synaptic plasticity. This chain is Myotonin-protein kinase (Dmpk), found in Mus musculus (Mouse).